Consider the following 372-residue polypeptide: MNPGIDLQGSFIELLTNVGLPPGVAKAVWMPLPMLLMLVGATIGVLISVWLERKISAAAQQRIGPEYIGPLGVLAPVADGLKLLFKEDIVPANADAALFTLGPILVVIPVFLSYLIVPFGQNLLISDLGIGVFLWISLSSIAPIGLLMAGYASNNKYSLLGGLRAAAQSISYEIPLALAVLAIAMMSNSLSTVDIVNQQSGLGILGWNVWRQPVGLILFWIAALAECERLPFDLPEAEEELVAGYQTEYAGMKFALFYLGSYVNLVLSALMVAILYLGGWDFPIPLNLVASWVGVSETNALFQVIAGAVGITMVLLKAYFFIFLAILLRWTVPRVRIDQLLDLGWKFLLPVGLVNLLLTAGLKLTFPIAFGG.

A run of 8 helical transmembrane segments spans residues 27 to 47 (AVWM…GVLI), 97 to 117 (ALFT…YLIV), 128 to 148 (LGIG…GLLM), 166 to 186 (AAQS…IAMM), 204 to 224 (ILGW…IAAL), 254 to 274 (FALF…MVAI), 308 to 328 (AVGI…AILL), and 351 to 371 (VGLV…IAFG).

The protein belongs to the complex I subunit 1 family. As to quaternary structure, NDH-1 is composed of at least 11 different subunits.

It is found in the cellular thylakoid membrane. The catalysed reaction is a plastoquinone + NADH + (n+1) H(+)(in) = a plastoquinol + NAD(+) + n H(+)(out). It carries out the reaction a plastoquinone + NADPH + (n+1) H(+)(in) = a plastoquinol + NADP(+) + n H(+)(out). In terms of biological role, NDH-1 shuttles electrons from an unknown electron donor, via FMN and iron-sulfur (Fe-S) centers, to quinones in the respiratory and/or the photosynthetic chain. The immediate electron acceptor for the enzyme in this species is believed to be plastoquinone. Couples the redox reaction to proton translocation, and thus conserves the redox energy in a proton gradient. This Cyanothece sp. (strain PCC 7425 / ATCC 29141) protein is NAD(P)H-quinone oxidoreductase subunit 1.